The following is a 72-amino-acid chain: Translation initiation factor IF-1 (72 aa).

Residues 1-72 (MAKDDVIEID…DKGRITFRYK (72 aa)) enclose the S1-like domain.

It belongs to the IF-1 family. In terms of assembly, component of the 30S ribosomal translation pre-initiation complex which assembles on the 30S ribosome in the order IF-2 and IF-3, IF-1 and N-formylmethionyl-tRNA(fMet); mRNA recruitment can occur at any time during PIC assembly.

Its subcellular location is the cytoplasm. Its function is as follows. One of the essential components for the initiation of protein synthesis. Stabilizes the binding of IF-2 and IF-3 on the 30S subunit to which N-formylmethionyl-tRNA(fMet) subsequently binds. Helps modulate mRNA selection, yielding the 30S pre-initiation complex (PIC). Upon addition of the 50S ribosomal subunit IF-1, IF-2 and IF-3 are released leaving the mature 70S translation initiation complex. This chain is Translation initiation factor IF-1, found in Sulfurovum sp. (strain NBC37-1).